We begin with the raw amino-acid sequence, 248 residues long: Transcription factor MYB1 (248 aa).

2 consecutive HTH myb-type domains span residues K9 to L61 and R62 to V116. DNA-binding regions (H-T-H motif) lie at residues W37–L61 and W89–L112. The tract at residues D118–N144 is disordered.

It localises to the nucleus. Functionally, transcription activator involved in the spatiotemporal regulation of flavonoid biosynthesis specifically in the corms of Montbretia. Activates the promoters of enzymes involved in the biosynthesis of the flavonol kaempferol and the flavonol-glycoside kaempferol-rhamnoside. This chain is Transcription factor MYB1, found in Crocosmia x crocosmiiflora (Montbretia).